A 90-amino-acid polypeptide reads, in one-letter code: Small ribosomal subunit protein bS16 (90 aa).

The protein belongs to the bacterial ribosomal protein bS16 family.

The sequence is that of Small ribosomal subunit protein bS16 from Oceanobacillus iheyensis (strain DSM 14371 / CIP 107618 / JCM 11309 / KCTC 3954 / HTE831).